Here is a 358-residue protein sequence, read N- to C-terminus: UDP-3-O-acylglucosamine N-acyltransferase (358 aa).

The active-site Proton acceptor is His-252.

The protein belongs to the transferase hexapeptide repeat family. LpxD subfamily. As to quaternary structure, homotrimer.

The catalysed reaction is a UDP-3-O-[(3R)-3-hydroxyacyl]-alpha-D-glucosamine + a (3R)-hydroxyacyl-[ACP] = a UDP-2-N,3-O-bis[(3R)-3-hydroxyacyl]-alpha-D-glucosamine + holo-[ACP] + H(+). Its pathway is bacterial outer membrane biogenesis; LPS lipid A biosynthesis. Functionally, catalyzes the N-acylation of UDP-3-O-acylglucosamine using 3-hydroxyacyl-ACP as the acyl donor. Is involved in the biosynthesis of lipid A, a phosphorylated glycolipid that anchors the lipopolysaccharide to the outer membrane of the cell. This is UDP-3-O-acylglucosamine N-acyltransferase from Paraburkholderia phymatum (strain DSM 17167 / CIP 108236 / LMG 21445 / STM815) (Burkholderia phymatum).